Consider the following 1288-residue polypeptide: MTNCEKDEEFVCISCVEEVRYSFVSHLSEALRRKGINNVVVDVDIDDLLFKESQAKIEKAGVSVMVLPGNCDPSEVWLDKFAKVLECQRNNKDQAVVSVLYGDSLLRDQWLSELDFRGLSRIHQSRKECSDSILVEEIVRDVYETHFYVGRIGIYSKLLEIENMVNKQPIGIRCVGIWGMPGIGKTTLAKAVFDQMSSAFDASCFIEDYDKSIHEKGLYCLLEEQLLPGNDATIMKLSSLRDRLNSKRVLVVLDDVRNALVGESFLEGFDWLGPGSLIIITSRDKQVFCLCGINQIYEVQGLNEKEARQLFLLSASIKEDMGEQNLQELSVRVINYANGNPLAISVYGRELKGKKKLSEMETAFLKLKRRPPFKIVDAFKSTYDTLSDNEKNIFLDIACFFQGENVNYVIQLLEGCGFFPHVEIDVLVDKCLVTISENRVWLHKLTQDIGREIINGETVQIERRRRLWEPWSIKYLLEYNEHKANGEPKTTFKRAQGSEEIEGLFLDTSNLRFDLQPSAFKNMLNLRLLKIYCSNPEVHPVINFPTGSLHSLPNELRLLHWENYPLKSLPQNFDPRHLVEINMPYSQLQKLWGGTKNLEMLRTIRLCHSHHLVDIDDLLKAENLEVIDLQGCTRLQNFPAAGRLLRLRVVNLSGCIKIKSVLEIPPNIEKLHLQGTGILALPVSTVKPNHRELVNFLTEIPGLSEELERLTSLLESNSSCQDLGKLICLELKDCSCLQSLPNMANLDLNVLDLSGCSSLNSIQGFPRFLKQLYLGGTAIREVPQLPQSLEILNAHGSCLRSLPNMANLEFLKVLDLSGCSELETIQGFPRNLKELYFAGTTLREVPQLPLSLEVLNAHGSDSEKLPMHYKFNNFFDLSQQVVNDFLLKTLTYVKHIPRGYTQELINKAPTFSFSAPSHTNQNATFDLQSGSSVMTRLNHSWRNTLVGFGMLVEVAFPEDYCDATDVGISCVCRWSNKEGRSCRIERKFHCWAPWQVVPKVRKDHTFVFSDVNMRPSTGEGNDPDIWAGLVVFEFFPINQQTKCLNDRFTVRRCGVRVINVATGNTSLENIALVLSLDPVEVSGYEVLRVSYDDLQEMDKVLFLYIASLFNDEDVDFVAPLIAGIDLDVSSGLKVLADVSLISVSSNGEIVMHSLQRQMGKEILHGQSMLLSDCESSMTENLSDVPKKKKKHSESRVKKVVSIPAIDEGDLWTWRKYGQKDILGSRFPRGYYRCAYKFTHGCKATKQVQRSETDSNMLAITYLSEHNHPRPTKRKALADSTRSTSSSIC.

The TIR domain occupies 5 to 146; it reads EKDEEFVCIS…EIVRDVYETH (142 aa). The interval 25-26 is important for interaction with RPS4; that stretch reads SH. The region spanning 170 to 421 is the NB-ARC domain; sequence IGIRCVGIWG…LLEGCGFFPH (252 aa). Residue 179–186 coordinates ATP; it reads GMPGIGKT. LRR repeat units lie at residues 498-522, 535-553, 554-575, 577-598, 621-646, 665-688, 697-720, 740-764, 766-791, 792-807, 808-829, and 830-852; these read SEEI…AFKN, NPEV…HSLP, NELR…NFDP, HLVE…TKNL, AENL…RLLR, PPNI…TVKP, LTEI…NSSC, LPNM…SIQG, PRFL…SLEI, LNAH…NMAN, LEFL…QGFP, and RNLK…PLSL. Residues 986–1003 carry the Nuclear localization signal motif; that stretch reads RKFHCWAPWQVVPKVRKD. The segment at residues 1202–1270 is a DNA-binding region (WRKY); the sequence is IPAIDEGDLW…YLSEHNHPRP (69 aa). Positions 1267-1288 are disordered; that stretch reads HPRPTKRKALADSTRSTSSSIC. Over residues 1279 to 1288 the composition is skewed to polar residues; that stretch reads STRSTSSSIC.

This sequence belongs to the disease resistance TIR-NB-LRR family. Interacts with PopP2, a R.solanacearum type III effector. Interacts with RPS4.

It localises to the nucleus. The protein resides in the cytoplasm. In terms of biological role, transcription factor. Interacts specifically with the W box (5'-(T)TGAC[CT]-3'), a frequently occurring elicitor-responsive cis-acting element. Also acts as a disease resistance protein involved in resistance to fungal and bacterial pathogens, including R.solanacearum, P.syringae pv. tomato and C.higginsianum. Heterodimerization with RPS4 is required to form a functional complex to recognize AvrRps4 and PopP2. Contributes to temperature-conditioned RPS4 auto-immunity. The protein is Disease resistance protein RRS1 of Arabidopsis thaliana (Mouse-ear cress).